The following is a 258-amino-acid chain: Regulatory protein RecX (258 aa).

It belongs to the RecX family.

It is found in the cytoplasm. Functionally, modulates RecA activity. In Streptococcus pyogenes serotype M12 (strain MGAS2096), this protein is Regulatory protein RecX.